We begin with the raw amino-acid sequence, 476 residues long: Cysteine--tRNA ligase (476 aa).

C28 is a Zn(2+) binding site. Positions 30–40 (VTTYDFCHIGH) match the 'HIGH' region motif. Residues C215, H241, and E245 each contribute to the Zn(2+) site. A 'KMSKS' region motif is present at residues 273 to 277 (KMSKS). K276 lines the ATP pocket.

Belongs to the class-I aminoacyl-tRNA synthetase family. Monomer. Requires Zn(2+) as cofactor.

Its subcellular location is the cytoplasm. It catalyses the reaction tRNA(Cys) + L-cysteine + ATP = L-cysteinyl-tRNA(Cys) + AMP + diphosphate. The protein is Cysteine--tRNA ligase of Buchnera aphidicola subsp. Cinara cedri (strain Cc).